A 460-amino-acid polypeptide reads, in one-letter code: Phosphoglucomutase (460 aa).

Catalysis depends on serine 103, which acts as the Phosphoserine intermediate. Residue serine 103 participates in Mg(2+) binding. Substrate contacts are provided by residues serine 103–histidine 104 and lysine 113. The Mg(2+) site is built by aspartate 239, aspartate 241, and aspartate 243. Residues aspartate 243 to arginine 244, threonine 303, and glutamate 322 to serine 324 contribute to the substrate site.

This sequence belongs to the phosphohexose mutase family. The cofactor is Mg(2+).

Its subcellular location is the cytoplasm. The catalysed reaction is alpha-D-glucose 1-phosphate = alpha-D-glucose 6-phosphate. This enzyme participates in both the breakdown and synthesis of glucose. The sequence is that of Phosphoglucomutase (pgm) from Neisseria meningitidis serogroup B (strain ATCC BAA-335 / MC58).